The primary structure comprises 328 residues: D-cysteine desulfhydrase (328 aa).

K51 is subject to N6-(pyridoxal phosphate)lysine.

The protein belongs to the ACC deaminase/D-cysteine desulfhydrase family. As to quaternary structure, homodimer. The cofactor is pyridoxal 5'-phosphate.

It carries out the reaction D-cysteine + H2O = hydrogen sulfide + pyruvate + NH4(+) + H(+). Catalyzes the alpha,beta-elimination reaction of D-cysteine and of several D-cysteine derivatives. It could be a defense mechanism against D-cysteine. This chain is D-cysteine desulfhydrase, found in Escherichia fergusonii (strain ATCC 35469 / DSM 13698 / CCUG 18766 / IAM 14443 / JCM 21226 / LMG 7866 / NBRC 102419 / NCTC 12128 / CDC 0568-73).